Reading from the N-terminus, the 471-residue chain is Adenosylhomocysteinase (471 aa).

Thr60, Asp135, and Glu196 together coordinate substrate. Position 197–199 (197–199 (TTT)) interacts with NAD(+). Substrate contacts are provided by Lys226 and Asp230. Residues Asn231, 260–265 (GYGDVG), Glu283, Asn318, 339–341 (IGH), and Asn387 contribute to the NAD(+) site.

The protein belongs to the adenosylhomocysteinase family. The cofactor is NAD(+).

The protein resides in the cytoplasm. The catalysed reaction is S-adenosyl-L-homocysteine + H2O = L-homocysteine + adenosine. Its pathway is amino-acid biosynthesis; L-homocysteine biosynthesis; L-homocysteine from S-adenosyl-L-homocysteine: step 1/1. Its function is as follows. May play a key role in the regulation of the intracellular concentration of adenosylhomocysteine. The sequence is that of Adenosylhomocysteinase from Chlorobaculum tepidum (strain ATCC 49652 / DSM 12025 / NBRC 103806 / TLS) (Chlorobium tepidum).